Consider the following 359-residue polypeptide: MIVLGSTGSIGVNTLFIAKEKNISIEALSCGKNIKLLNEQIALFKPKFVCIQDEKDKHLVDHKNIFCAQDGLKKMISECKSKFVVNAIVGFAGLNSSLIAQKLGKTLALANKESLVVAGKFFDTSKIKAIDSEHAALKCLIDKRKDIKKLFITASGGAFYKYKIKDLKNVSVKEALKHPNWSMGAKITIDSASMCNKLFEIIEAYHLYGIKQIDAVIEKKSLVHALCEFKDGGISAYFSHANMRLSIAQAILDEHDQSFIENLDLLAMPSLKFEKISLKKYPIFMLKDELLKNPDLGVVINAANEYLVYKFLKNQMGFLDISKGIFKALDHFGVPKINQIEDVFEYDKRVRLYLDKEMK.

NADPH-binding residues include Thr-7, Gly-8, Ser-9, Ile-10, Gly-31, Lys-32, Asn-33, and Asn-111. Position 112 (Lys-112) interacts with 1-deoxy-D-xylulose 5-phosphate. Residue Glu-113 coordinates NADPH. Residue Asp-131 participates in Mn(2+) binding. 1-deoxy-D-xylulose 5-phosphate-binding residues include Ser-132, Glu-133, Ser-155, and His-178. Residue Glu-133 participates in Mn(2+) binding. An NADPH-binding site is contributed by Gly-184. Residues Ser-191, Asn-196, Lys-197, and Glu-200 each contribute to the 1-deoxy-D-xylulose 5-phosphate site. Glu-200 serves as a coordination point for Mn(2+).

It belongs to the DXR family. Mg(2+) serves as cofactor. Requires Mn(2+) as cofactor.

The enzyme catalyses 2-C-methyl-D-erythritol 4-phosphate + NADP(+) = 1-deoxy-D-xylulose 5-phosphate + NADPH + H(+). It participates in isoprenoid biosynthesis; isopentenyl diphosphate biosynthesis via DXP pathway; isopentenyl diphosphate from 1-deoxy-D-xylulose 5-phosphate: step 1/6. In terms of biological role, catalyzes the NADPH-dependent rearrangement and reduction of 1-deoxy-D-xylulose-5-phosphate (DXP) to 2-C-methyl-D-erythritol 4-phosphate (MEP). The protein is 1-deoxy-D-xylulose 5-phosphate reductoisomerase of Campylobacter lari (strain RM2100 / D67 / ATCC BAA-1060).